The chain runs to 197 residues: Dephospho-CoA kinase (197 aa).

The DPCK domain maps to 2-197 (IIGITGGIAS…SALLSLANPR (196 aa)). Residue 10–15 (ASGKST) participates in ATP binding.

This sequence belongs to the CoaE family.

The protein resides in the cytoplasm. It catalyses the reaction 3'-dephospho-CoA + ATP = ADP + CoA + H(+). It participates in cofactor biosynthesis; coenzyme A biosynthesis; CoA from (R)-pantothenate: step 5/5. Catalyzes the phosphorylation of the 3'-hydroxyl group of dephosphocoenzyme A to form coenzyme A. The chain is Dephospho-CoA kinase from Streptococcus pyogenes serotype M28 (strain MGAS6180).